Reading from the N-terminus, the 845-residue chain is uncharacterized protein (845 aa).

2 disordered regions span residues 17 to 37 (RRKQ…NDQP) and 550 to 573 (AATE…NESL). Residues 622-707 (LSEQRFEREN…ELKKSNEHTR (86 aa)) adopt a coiled-coil conformation.

This is an uncharacterized protein from Saccharum officinarum (Sugarcane).